Reading from the N-terminus, the 247-residue chain is Carboxy-S-adenosyl-L-methionine synthase (247 aa).

S-adenosyl-L-methionine contacts are provided by residues Tyr-39, 64-66, 89-90, 117-118, Asn-132, and Arg-199; these read GCS, DN, and DI.

Belongs to the class I-like SAM-binding methyltransferase superfamily. Cx-SAM synthase family. In terms of assembly, homodimer.

It carries out the reaction prephenate + S-adenosyl-L-methionine = carboxy-S-adenosyl-L-methionine + 3-phenylpyruvate + H2O. In terms of biological role, catalyzes the conversion of S-adenosyl-L-methionine (SAM) to carboxy-S-adenosyl-L-methionine (Cx-SAM). The sequence is that of Carboxy-S-adenosyl-L-methionine synthase from Cronobacter sakazakii (strain ATCC BAA-894) (Enterobacter sakazakii).